The following is a 148-amino-acid chain: Small ribosomal subunit protein bS6 (148 aa).

Positions His-96–Ala-148 are disordered.

This sequence belongs to the bacterial ribosomal protein bS6 family.

In terms of biological role, binds together with bS18 to 16S ribosomal RNA. In Brucella melitensis biotype 1 (strain ATCC 23456 / CCUG 17765 / NCTC 10094 / 16M), this protein is Small ribosomal subunit protein bS6.